Consider the following 590-residue polypeptide: Auxin response factor 20 (590 aa).

The segment at residues 126–224 (FTKVLTASDT…ELRVGIRRAR (99 aa)) is a DNA-binding region (TF-B3). A PB1 domain is found at 495 to 576 (RTCTKVQMQG…MVKKILIYSK (82 aa)).

The protein belongs to the ARF family. Homodimers and heterodimers.

It is found in the nucleus. Auxin response factors (ARFs) are transcriptional factors that bind specifically to the DNA sequence 5'-TGTCTC-3' found in the auxin-responsive promoter elements (AuxREs). Could act as transcriptional activator or repressor. Formation of heterodimers with Aux/IAA proteins may alter their ability to modulate early auxin response genes expression. The sequence is that of Auxin response factor 20 (ARF20) from Arabidopsis thaliana (Mouse-ear cress).